The following is a 654-amino-acid chain: Chaperone protein DnaK (654 aa).

Thr205 carries the phosphothreonine; by autocatalysis modification. The disordered stretch occupies residues 592–654 (ELERQMQQIG…EVEILDDKKP (63 aa)). Residues 608–621 (AGQSETQSTGPGSY) are compositionally biased toward polar residues. Over residues 622–636 (QESSNQSSQHQTNNN) the composition is skewed to low complexity.

It belongs to the heat shock protein 70 family.

Its function is as follows. Acts as a chaperone. This chain is Chaperone protein DnaK, found in Protochlamydia amoebophila (strain UWE25).